The primary structure comprises 498 residues: MKKVTVGAAVVGAAAVCAVAALIVNHRMRKSSKWGRAMAILREFEEKCKTQDAKLKQVADAMTVEMHAGLASEGGQSSRCLSPMSIISQLVMKLGVFYALDLGGTNFRVLRVQLGGKDGGIIHQEFAEASIPPSLMVGTSDALFDYIAAELAKFVAAEEEKFHQPPGKQRELGFHLLIPSNADFNNSGTIMRWTKGFSIDDAVGQDVVGELTKAMKEKVLDMRVSALVNDTVGTLAGGKYTQKDVAVAVILGTGTNAAYVERVQAIPKWHGPVPKSGEMVINMEWGNFRSSHLPLTEYDHALDNESLNPAEQIFEKMTSGMYLGEILRRVLTRVAEEVLAFLAMRSLQSLKDSFVLRTPDMSAMHHDTSPDLKVVGEKLKDILEISNTSLKTRKLVLSLCNIVATRGARLDAAGVLGILKKMGRDTPKQGGSERTVIAMDGGLYEHYTEYRMCLENSLKDLLGEELATSIVFVHSNDGSGIGAALLRASHSMYLEDQA.

The helical transmembrane segment at 4-24 threads the bilayer; it reads VTVGAAVVGAAAVCAVAALIV. The region spanning 35–488 is the Hexokinase domain; it reads GRAMAILREF…SGIGAALLRA (454 aa). The tract at residues 89–228 is hexokinase small subdomain; it reads QLVMKLGVFY…VLDMRVSALV (140 aa). Residues glycine 104, threonine 105, and asparagine 106 each coordinate ADP. 4 residues coordinate D-glucose: threonine 194, lysine 195, asparagine 229, and aspartate 230. The tract at residues 229 to 477 is hexokinase large subdomain; it reads NDTVGTLAGG…TSIVFVHSND (249 aa). Position 253 (threonine 253) interacts with ADP. The D-glucose site is built by asparagine 256, glutamate 284, and glutamate 315. Glycine 442 lines the ADP pocket.

It belongs to the hexokinase family. As to expression, expressed in young and mature leaves, stems, roots, stolons, and developing and mature tubers.

The protein localises to the plastid. It localises to the chloroplast outer membrane. It catalyses the reaction a D-hexose + ATP = a D-hexose 6-phosphate + ADP + H(+). The catalysed reaction is D-fructose + ATP = D-fructose 6-phosphate + ADP + H(+). The enzyme catalyses D-glucose + ATP = D-glucose 6-phosphate + ADP + H(+). The protein operates within carbohydrate metabolism; hexose metabolism. It participates in carbohydrate degradation; glycolysis; D-glyceraldehyde 3-phosphate and glycerone phosphate from D-glucose: step 1/4. In terms of biological role, fructose and glucose phosphorylating enzyme. May be involved in the phosphorylation of glucose during the export from plastids to cytosol. Seems neither to be involved in cell sugar sensing nor in carbohydrate metabolism in tuber. This is Hexokinase-1 (HXK1) from Solanum tuberosum (Potato).